We begin with the raw amino-acid sequence, 182 residues long: Putative manganese efflux pump MntP (182 aa).

The next 6 membrane-spanning stretches (helical) occupy residues 6 to 26 (LIPL…VSLG), 37 to 57 (ILYI…IGMV), 71 to 91 (HFAG…STIL), 101 to 121 (IGIS…SVGL), 131 to 151 (IITI…GLLI), and 162 to 182 (YGEI…LFPI).

Belongs to the MntP (TC 9.B.29) family.

It localises to the cell membrane. Probably functions as a manganese efflux pump. The chain is Putative manganese efflux pump MntP from Bacillus cereus (strain B4264).